A 621-amino-acid chain; its full sequence is Chaperone protein HtpG (621 aa).

The tract at residues M1–R328 is a; substrate-binding. A b region spans residues E329–R544. The segment at S475–K495 is disordered. The span at S486–K495 shows a compositional bias: basic and acidic residues. Residues F545–L621 form a c region.

Belongs to the heat shock protein 90 family. As to quaternary structure, homodimer.

It is found in the cytoplasm. Its function is as follows. Molecular chaperone. Has ATPase activity. This Rickettsia akari (strain Hartford) protein is Chaperone protein HtpG.